A 1730-amino-acid chain; its full sequence is Nebulin-related-anchoring protein (1730 aa).

In terms of domain architecture, LIM zinc-binding spans Q4–F64. Nebulin repeat units lie at residues T63–S97, E156–G166, T175–S202, R203–G237, T246–R273, Y298–G307, T316–G343, H348–G382, E389–R417, R419–V453, K487–L521, N522–G556, G558–G592, L602–T626, R627–V661, L662–G692, N702–E724, K726–H760, Q761–A795, G797–G831, Q844–S869, Q870–K896, H901–G935, N945–Q963, K969–H1003, H1004–D1038, G1040–G1074, G1078–A1112, Q1113–K1139, Q1144–G1178, I1183–Q1206, K1212–H1246, E1247–A1281, G1283–G1317, G1321–A1355, Q1356–A1390, L1391–G1421, S1429–K1449, K1455–R1481, R1490–A1524, S1526–G1560, G1564–S1598, Q1599–Q1626, and L1640–G1664. S1081 is subject to Phosphoserine. The tract at residues K1595–S1620 is disordered. Over residues S1596 to Q1606 the composition is skewed to polar residues.

As to quaternary structure, interacts with actin, alpha-actinin, KLHL41, TLN1 and VCL. Interacts with CSRP3. Expressed in cardiac and skeletal muscle.

Its function is as follows. May be involved in anchoring the terminal actin filaments in the myofibril to the membrane and in transmitting tension from the myofibrils to the extracellular matrix. In Homo sapiens (Human), this protein is Nebulin-related-anchoring protein.